A 122-amino-acid chain; its full sequence is Cytochrome b-c1 complex subunit 7-1, mitochondrial (122 aa).

Belongs to the UQCRB/QCR7 family. As to quaternary structure, component of the ubiquinol-cytochrome c oxidoreductase (cytochrome b-c1 complex, complex III, CIII), a multisubunit enzyme composed of 10 subunits. The complex is composed of 3 respiratory subunits cytochrome b (MT-CYB), cytochrome c1 (CYC1-1 or CYC1-2) and Rieske protein (UCR1-1 or UCR1-2), 2 core protein subunits MPPalpha1 (or MPPalpha2) and MPPB, and 5 low-molecular weight protein subunits QCR7-1 (or QCR7-2), UCRQ-1 (or UCRQ-2), QCR9, UCRY and probably QCR6-1 (or QCR6-2). The complex exists as an obligatory dimer and forms supercomplexes (SCs) in the inner mitochondrial membrane with NADH-ubiquinone oxidoreductase (complex I, CI), resulting in different assemblies (supercomplexes SCI(1)III(2) and SCI(2)III(4)).

It is found in the mitochondrion inner membrane. Component of the ubiquinol-cytochrome c oxidoreductase, a multisubunit transmembrane complex that is part of the mitochondrial electron transport chain which drives oxidative phosphorylation. The respiratory chain contains 3 multisubunit complexes succinate dehydrogenase (complex II, CII), ubiquinol-cytochrome c oxidoreductase (cytochrome b-c1 complex, complex III, CIII) and cytochrome c oxidase (complex IV, CIV), that cooperate to transfer electrons derived from NADH and succinate to molecular oxygen, creating an electrochemical gradient over the inner membrane that drives transmembrane transport and the ATP synthase. The cytochrome b-c1 complex catalyzes electron transfer from ubiquinol to cytochrome c, linking this redox reaction to translocation of protons across the mitochondrial inner membrane, with protons being carried across the membrane as hydrogens on the quinol. In the process called Q cycle, 2 protons are consumed from the matrix, 4 protons are released into the intermembrane space and 2 electrons are passed to cytochrome c. The sequence is that of Cytochrome b-c1 complex subunit 7-1, mitochondrial (QCR7-1) from Arabidopsis thaliana (Mouse-ear cress).